A 506-amino-acid polypeptide reads, in one-letter code: Histidine ammonia-lyase (506 aa).

Positions 143–145 (ASG) form a cross-link, 5-imidazolinone (Ala-Gly). Residue S144 is modified to 2,3-didehydroalanine (Ser).

It belongs to the PAL/histidase family. Contains an active site 4-methylidene-imidazol-5-one (MIO), which is formed autocatalytically by cyclization and dehydration of residues Ala-Ser-Gly.

It localises to the cytoplasm. The enzyme catalyses L-histidine = trans-urocanate + NH4(+). Its pathway is amino-acid degradation; L-histidine degradation into L-glutamate; N-formimidoyl-L-glutamate from L-histidine: step 1/3. The protein is Histidine ammonia-lyase of Salmonella schwarzengrund (strain CVM19633).